Here is a 354-residue protein sequence, read N- to C-terminus: Phosphate acyltransferase (354 aa).

The protein belongs to the PlsX family. As to quaternary structure, homodimer. Probably interacts with PlsY.

It localises to the cytoplasm. It catalyses the reaction a fatty acyl-[ACP] + phosphate = an acyl phosphate + holo-[ACP]. The protein operates within lipid metabolism; phospholipid metabolism. Its function is as follows. Catalyzes the reversible formation of acyl-phosphate (acyl-PO(4)) from acyl-[acyl-carrier-protein] (acyl-ACP). This enzyme utilizes acyl-ACP as fatty acyl donor, but not acyl-CoA. The sequence is that of Phosphate acyltransferase from Ralstonia nicotianae (strain ATCC BAA-1114 / GMI1000) (Ralstonia solanacearum).